We begin with the raw amino-acid sequence, 87 residues long: U18-myrmicitoxin-Mri1a (87 aa).

The signal sequence occupies residues 1-32 (MKNNYNRINTFIVYLMVTFSLISIISITECTP). Residues 33–77 (NHDPCPPQYAEALCLNGGTCFSVTIMGSDNYNCICAPGFRGWRCQ) form the EGF-like domain. Disulfide bonds link cysteine 37–cysteine 52, cysteine 46–cysteine 65, and cysteine 67–cysteine 76.

In terms of processing, O-glycosylated. In terms of tissue distribution, expressed by the venom gland.

It is found in the secreted. This Manica rubida (European giant red ant) protein is U18-myrmicitoxin-Mri1a.